Here is a 519-residue protein sequence, read N- to C-terminus: FAD-dependent monooxygenase macF (519 aa).

Positions 1–20 are cleaved as a signal peptide; it reads MTKMTSIIGILMGVLTTATA. The FAD-binding PCMH-type domain maps to 88–262; it reads CRLNASCIVT…TEYDLTTNTG (175 aa). Position 125 is a pros-8alpha-FAD histidine (His125).

It belongs to the oxygen-dependent FAD-linked oxidoreductase family.

It participates in secondary metabolite biosynthesis; terpenoid biosynthesis. In terms of biological role, FAD-dependent monooxygenase; part of the gene cluster that mediates the biosynthesis of macrophorins, isoprenoid epoxycyclohexenones containing cyclized drimane moieties. The first step of the pathway is the synthesis of 6-methylsalicylic acid (6-MSA) by the polyketide synthase macA. 6-MSA is then converted to m-cresol by the decarboxylase macB. The cytochrome P450 monooxygenase macC then catalyzes the oxidation of m-cresol to toluquinol. Epoxidation of toluquinol is then performed by the short chain dehydrogenase macD, with the help of macE, and a further prenylation by macG leads to 7-deacetoxyyanuthone A. The next step is the hydroxylation of C-22 of 7-deacetoxyyanuthone A by the cytochrome P450 monooxygenase macH to yield 22-deacetylyanuthone A. O-Mevalon transferase macI then attaches mevalon to the hydroxyl group of 22-deacetylyanuthone A to produce yanuthone E. The terpene cyclase macJ catalyzes the cyclization of 22-deacetylyanuthone A to macrophorin A. MacJ is also able to catalyze cyclization of yanuthone E and 7-deacetoxyyanuthone A to their corresponding macrophorins. The macJ products can be further modified by macH and macJ, as well as by the FAD-dependent monooxygenase macF, to produce additional macrophorins, including 4'-oxomacrophorin A, 4'-oxomacrophorin D and 4'-oxomacrophorin E. This chain is FAD-dependent monooxygenase macF, found in Penicillium terrestre.